A 124-amino-acid chain; its full sequence is Large ribosomal subunit protein bL12 (124 aa).

The protein belongs to the bacterial ribosomal protein bL12 family. Homodimer. Part of the ribosomal stalk of the 50S ribosomal subunit. Forms a multimeric L10(L12)X complex, where L10 forms an elongated spine to which 2 to 4 L12 dimers bind in a sequential fashion. Binds GTP-bound translation factors.

Functionally, forms part of the ribosomal stalk which helps the ribosome interact with GTP-bound translation factors. Is thus essential for accurate translation. The sequence is that of Large ribosomal subunit protein bL12 from Nautilia profundicola (strain ATCC BAA-1463 / DSM 18972 / AmH).